We begin with the raw amino-acid sequence, 170 residues long: UPF0690 protein C1orf52 homolog (170 aa).

2 disordered regions span residues 1–56 and 124–170; these read MAAE…PDEL and SNVY…KRKV. Residues 46–56 are compositionally biased toward basic and acidic residues; it reads DTKKLPGPDEL. The span at 144–159 shows a compositional bias: acidic residues; sequence EEEEAREDSPPSDDEQ.

This sequence belongs to the UPF0690 family.

The polypeptide is UPF0690 protein C1orf52 homolog (Xenopus tropicalis (Western clawed frog)).